The following is a 149-amino-acid chain: Oligosaccharyltransferase complex subunit OSTC (149 aa).

Over 1–32 (MESLYRVPFLVLECPNLKLKKPPWVHMPSAMT) the chain is Cytoplasmic. A helical membrane pass occupies residues 33-53 (VYALVVVSYFLITGGIIYDVI). Residues 54-83 (VEPPSVGSVTDEHGHQRPVAFLAYRVNGQY) are Extracellular-facing. The chain crosses the membrane as a helical span at residues 84 to 104 (IMEGLASSFLFTMGGLGFIIL). Topologically, residues 105–117 (DRSNAPNIPKLNR) are cytoplasmic. A helical membrane pass occupies residues 118 to 138 (FLLLFIGFVCVLLSFFMARVF). At 139–149 (MRMKLPGYLMG) the chain is on the extracellular side.

The protein belongs to the OSTC family. Component of STT3A-containing oligosaccharyl transferase (OST-A) complex. STT3A-containing complex assembly occurs through the formation of 3 subcomplexes. Subcomplex 1 contains RPN1 and TMEM258, subcomplex 2 contains the STT3A-specific subunits STT3A, DC2/OSTC, and KCP2 as well as the core subunit OST4, and subcomplex 3 contains RPN2, DAD1, and OST48. The OST-A complex can form stable complexes with the Sec61 complex or with both the Sec61 and TRAP complexes. Interacts with PSEN1 and NCSTN; indicative for an association with the gamma-secretase complex.

It localises to the endoplasmic reticulum. It is found in the membrane. Its pathway is protein modification; protein glycosylation. Subunit of STT3A-containing oligosaccharyl transferase (OST-A) complex that catalyzes the initial transfer of a defined glycan (Glc(3)Man(9)GlcNAc(2) in eukaryotes) from the lipid carrier dolichol-pyrophosphate to an asparagine residue within an Asn-X-Ser/Thr consensus motif in nascent polypeptide chains, the first step in protein N-glycosylation. N-glycosylation occurs cotranslationally and the complex associates with the Sec61 complex at the channel-forming translocon complex that mediates protein translocation across the endoplasmic reticulum (ER). Within the OST-A complex, acts as an adapter that anchors the OST-A complex to the Sec61 complex. May be involved in N-glycosylation of APP (amyloid-beta precursor protein). Can modulate gamma-secretase cleavage of APP by enhancing endoprotelysis of PSEN1. The polypeptide is Oligosaccharyltransferase complex subunit OSTC (Bos taurus (Bovine)).